The sequence spans 455 residues: Hexokinase-2 (455 aa).

Residues 3–445 (ANFQQAVKKL…SGIGAALCAL (443 aa)) enclose the Hexokinase domain. The hexokinase small subdomain stretch occupies residues 57–195 (TGAETGDFLA…NLPIRIEAVI (139 aa)). 68–73 (DFGGTN) provides a ligand contact to ATP. Residues 144–145 (SY), 161–162 (TK), and 196–197 (ND) contribute to the substrate site. Residues 196-434 (NDTVGTLVTR…KLISIGIAKD (239 aa)) are hexokinase large subdomain. T222 serves as a coordination point for ATP. Substrate contacts are provided by N225, E252, and E283. Residues 288-289 (GM), 325-329 (TSVLS), and 400-404 (SLVEH) each bind ATP.

The protein belongs to the hexokinase family. As to quaternary structure, monomer.

It carries out the reaction a D-hexose + ATP = a D-hexose 6-phosphate + ADP + H(+). The catalysed reaction is D-mannose + ATP = D-mannose 6-phosphate + ADP + H(+). The enzyme catalyses D-fructose + ATP = D-fructose 6-phosphate + ADP + H(+). It catalyses the reaction D-glucose + ATP = D-glucose 6-phosphate + ADP + H(+). The protein operates within carbohydrate metabolism; hexose metabolism. It functions in the pathway carbohydrate degradation; glycolysis; D-glyceraldehyde 3-phosphate and glycerone phosphate from D-glucose: step 1/4. Catalyzes the phosphorylation of hexose (six-carbon sugars) to hexose 6-phosphate. Phosphorylates D-glucose, D-fructose and D-mannose. Compared to hxk1, has a much higher affinity for D-glucose. Constitutes the initial enzyme of glycolysis by catalyzing the phosphorylation of glucose to D-glucose 6-phosphate. This Schizosaccharomyces pombe (strain 972 / ATCC 24843) (Fission yeast) protein is Hexokinase-2.